Consider the following 340-residue polypeptide: S-adenosylmethionine:tRNA ribosyltransferase-isomerase (340 aa).

This sequence belongs to the QueA family. In terms of assembly, monomer.

It is found in the cytoplasm. It carries out the reaction 7-aminomethyl-7-carbaguanosine(34) in tRNA + S-adenosyl-L-methionine = epoxyqueuosine(34) in tRNA + adenine + L-methionine + 2 H(+). It participates in tRNA modification; tRNA-queuosine biosynthesis. In terms of biological role, transfers and isomerizes the ribose moiety from AdoMet to the 7-aminomethyl group of 7-deazaguanine (preQ1-tRNA) to give epoxyqueuosine (oQ-tRNA). This Francisella tularensis subsp. tularensis (strain FSC 198) protein is S-adenosylmethionine:tRNA ribosyltransferase-isomerase.